The chain runs to 397 residues: 42.8 kDa protein in whiE locus (397 aa).

The interval 1–22 is disordered; the sequence is MTVSPVVATDAPSTDATRTTAT. The span at 8 to 22 shows a compositional bias: low complexity; the sequence is ATDAPSTDATRTTAT. Residues 46-137 enclose the ABM domain; the sequence is VRVVLMLDVH…DTHSLRYSVL (92 aa).

It belongs to the SchA/CurD family.

In Streptomyces coelicolor (strain ATCC BAA-471 / A3(2) / M145), this protein is 42.8 kDa protein in whiE locus.